We begin with the raw amino-acid sequence, 149 residues long: UPF0260 protein PSEEN4031 (149 aa).

Belongs to the UPF0260 family.

The polypeptide is UPF0260 protein PSEEN4031 (Pseudomonas entomophila (strain L48)).